The chain runs to 705 residues: MAKTDLHLTRNIGIMAHIDAGKTTTSERILFYTGLTHKIGEVHDGAATMDWMEQEQERGITITSAATTTRWKYAGDTYKINLIDTPGHVDFTAEVERSLRILDGAVAAYCAVGGVEPQSETVWRQADKYNVPRIAYVNKMDRSGADFFEVVRQMKAVLGANPCPIVVPIGAEETFKGLVDLIKMKAIYWHDETMGADYTVEEIPADLVDEANEWRDKMLEKVAEFDDALMEKYFDDPSTITEEEVLRALRNATVQMAVVPMLCGSSFKNKGVQTLLDYVCAFLPSPLDTENVIGTNPNTGAEEDRKPSDDEKTSALAFKIATDPYVGRLTFFRVYSGKIEAGSYIYNSRSGKKERVSRLFQMHSNKQNPVEVIGAGDIGAGVGFKDIHTGDTLCDETAPIVLESMDFPEPVIGIAVEPKTQKDMDKLSNGLAKLAEEDPTFTVKTDEQTGQTVISGMGELHLDIIIDRLKREFKVECNQGKPQVNYKEAITKTVDLREVYKKQSGGRGKFADIIVKIGPVDEDFKEGGLQFIDEVKGGNIPKEFIPSVQKGFTSAMKNGVLAGYPLDSMKVTLIDGSFHPVDSDQLSFEICAIQAYKNACAKAGPVLMEPIMKLEVVTPEENMGDVIGDLNKRRGQVEGMESSRSGARIVKAMVPLAEMFGYVTALRTITSGRATSSMVYSHHAQVSNSIAKAVLEEVKGRADLL.

Residues 7-287 enclose the tr-type G domain; the sequence is HLTRNIGIMA…YVCAFLPSPL (281 aa). GTP is bound by residues 16 to 23, 84 to 88, and 138 to 141; these read AHIDAGKT, DTPGH, and NKMD.

Belongs to the TRAFAC class translation factor GTPase superfamily. Classic translation factor GTPase family. EF-G/EF-2 subfamily.

Its subcellular location is the cytoplasm. Its function is as follows. Catalyzes the GTP-dependent ribosomal translocation step during translation elongation. During this step, the ribosome changes from the pre-translocational (PRE) to the post-translocational (POST) state as the newly formed A-site-bound peptidyl-tRNA and P-site-bound deacylated tRNA move to the P and E sites, respectively. Catalyzes the coordinated movement of the two tRNA molecules, the mRNA and conformational changes in the ribosome. The chain is Elongation factor G from Bacteroides thetaiotaomicron (strain ATCC 29148 / DSM 2079 / JCM 5827 / CCUG 10774 / NCTC 10582 / VPI-5482 / E50).